The chain runs to 535 residues: Dual specificity calcium/calmodulin-dependent 3',5'-cyclic nucleotide phosphodiesterase 1B (535 aa).

The interval 1–21 is disordered; sequence MELSPRSPPEMLESDCPSPLE. Serine 7 and serine 14 each carry phosphoserine. Calmodulin-binding stretches follow at residues 27 to 47 and 117 to 140; these read SKKMWIKLRSLLRYMVKQLEN and EKPKFRSIVHAVQAGIFVERMFRR. Residues 145-502 enclose the PDEase domain; the sequence is VGPTYSTAVH…QKWKERAASG (358 aa). Histidine 222 serves as the catalytic Proton donor. Zn(2+) contacts are provided by histidine 226, histidine 262, aspartate 263, and aspartate 369. Position 263 (aspartate 263) interacts with Mg(2+). 2 disordered regions span residues 444 to 474 and 495 to 535; these read QPLADDDSKPKSQPSFQWRQPSLDVDVGDPN and WKER…GNLD. A compositionally biased stretch (polar residues) spans 454 to 463; that stretch reads KSQPSFQWRQ. 2 positions are modified to phosphoserine: serine 465 and serine 513.

Belongs to the cyclic nucleotide phosphodiesterase family. PDE1 subfamily. Homodimer. It depends on Zn(2+) as a cofactor. Mg(2+) serves as cofactor.

The protein resides in the cytoplasm. The protein localises to the cytosol. The catalysed reaction is a nucleoside 3',5'-cyclic phosphate + H2O = a nucleoside 5'-phosphate + H(+). The enzyme catalyses 3',5'-cyclic GMP + H2O = GMP + H(+). It catalyses the reaction 3',5'-cyclic AMP + H2O = AMP + H(+). Type I PDE are activated by the binding of calmodulin in the presence of Ca(2+). Functionally, cyclic nucleotide phosphodiesterase with a dual specificity for the second messengers cAMP and cGMP, which are key regulators of many important physiological processes. Has a preference for cGMP as a substrate. This is Dual specificity calcium/calmodulin-dependent 3',5'-cyclic nucleotide phosphodiesterase 1B from Mus musculus (Mouse).